Reading from the N-terminus, the 553-residue chain is Dihydroxy-acid dehydratase (553 aa).

Position 78 (D78) interacts with Mg(2+). C119 contributes to the [2Fe-2S] cluster binding site. Residues D120 and K121 each coordinate Mg(2+). K121 bears the N6-carboxylysine mark. C191 contributes to the [2Fe-2S] cluster binding site. Mg(2+) is bound at residue E444. S470 functions as the Proton acceptor in the catalytic mechanism.

The protein belongs to the IlvD/Edd family. Homodimer. Requires [2Fe-2S] cluster as cofactor. It depends on Mg(2+) as a cofactor.

It catalyses the reaction (2R)-2,3-dihydroxy-3-methylbutanoate = 3-methyl-2-oxobutanoate + H2O. The catalysed reaction is (2R,3R)-2,3-dihydroxy-3-methylpentanoate = (S)-3-methyl-2-oxopentanoate + H2O. Its pathway is amino-acid biosynthesis; L-isoleucine biosynthesis; L-isoleucine from 2-oxobutanoate: step 3/4. It functions in the pathway amino-acid biosynthesis; L-valine biosynthesis; L-valine from pyruvate: step 3/4. Functions in the biosynthesis of branched-chain amino acids. Catalyzes the dehydration of (2R,3R)-2,3-dihydroxy-3-methylpentanoate (2,3-dihydroxy-3-methylvalerate) into 2-oxo-3-methylpentanoate (2-oxo-3-methylvalerate) and of (2R)-2,3-dihydroxy-3-methylbutanoate (2,3-dihydroxyisovalerate) into 2-oxo-3-methylbutanoate (2-oxoisovalerate), the penultimate precursor to L-isoleucine and L-valine, respectively. The protein is Dihydroxy-acid dehydratase of Methanococcoides burtonii (strain DSM 6242 / NBRC 107633 / OCM 468 / ACE-M).